A 205-amino-acid chain; its full sequence is Small ribosomal subunit protein uS4 (205 aa).

Basic residues predominate over residues 1–12 (MSKRIQAKHKLD). The segment at 1-49 (MSKRIQAKHKLDRRMGQNIWGRPKSPVNRREYGPGQHGQRRKGKLSDFG) is disordered. Residues 94-156 (RRLDAVIYRA…SKQLEIVVVA (63 aa)) form the S4 RNA-binding domain.

This sequence belongs to the universal ribosomal protein uS4 family. As to quaternary structure, part of the 30S ribosomal subunit. Contacts protein S5. The interaction surface between S4 and S5 is involved in control of translational fidelity.

Functionally, one of the primary rRNA binding proteins, it binds directly to 16S rRNA where it nucleates assembly of the body of the 30S subunit. Its function is as follows. With S5 and S12 plays an important role in translational accuracy. The sequence is that of Small ribosomal subunit protein uS4 from Methylobacterium nodulans (strain LMG 21967 / CNCM I-2342 / ORS 2060).